The primary structure comprises 375 residues: Decapping and exoribonuclease protein Rai1 (375 aa).

Substrate is bound by residues Arg-43 and 120-122 (LRG). Mg(2+)-binding residues include Glu-180, Glu-222, Asp-224, Glu-247, and Leu-248. Glu-222 serves as a coordination point for substrate. Lys-249 and Gln-274 together coordinate substrate.

The protein belongs to the DXO/Dom3Z family. Interacts with Rat1. Mg(2+) serves as cofactor.

The enzyme catalyses a 5'-end triphospho-ribonucleoside in mRNA + H2O = a 5'-end phospho-ribonucleoside in mRNA + diphosphate + H(+). It carries out the reaction a 5'-end NAD(+)-phospho-ribonucleoside in mRNA + H2O = a 5'-end phospho-ribonucleoside in mRNA + NAD(+) + H(+). The catalysed reaction is a 5'-end (N(7)-methyl 5'-triphosphoguanosine)-ribonucleoside-ribonucleotide in mRNA + H2O = a (N(7)-methyl 5'-triphosphoguanosine)-nucleoside + a 5'-end phospho-ribonucleoside in mRNA + H(+). In terms of biological role, decapping enzyme for NAD-capped RNAs: specifically hydrolyzes the nicotinamide adenine dinucleotide (NAD) cap from a subset of RNAs by removing the entire NAD moiety from the 5'-end of an NAD-capped RNA. The NAD-cap is present at the 5'-end of some RNAs and snoRNAs. In contrast to the canonical 5'-end N7 methylguanosine (m7G) cap, the NAD cap promotes mRNA decay. Also acts as a non-canonical decapping enzyme that removes the entire cap structure of m7G capped or incompletely capped RNAs and mediates their subsequent degradation. Specifically degrades pre-mRNAs with a defective 5'-end m7G cap and is part of a pre-mRNA capping quality control. Possesses 5'-pyrophosphohydrolase activity, hydrolyzing the 5'-end triphosphate to release pyrophosphates, and 5'-3' exonuclease activity. May be involved in RNA degradation in the nucleus. In Drosophila melanogaster (Fruit fly), this protein is Decapping and exoribonuclease protein Rai1.